Here is an 85-residue protein sequence, read N- to C-terminus: Large ribosomal subunit protein bL27 (85 aa).

Positions 1-21 (MAHKKGGGSTHNGRDSKPKML) are disordered.

This sequence belongs to the bacterial ribosomal protein bL27 family.

The polypeptide is Large ribosomal subunit protein bL27 (Albidiferax ferrireducens (strain ATCC BAA-621 / DSM 15236 / T118) (Rhodoferax ferrireducens)).